Here is a 725-residue protein sequence, read N- to C-terminus: MGQGASTQTLNPNLAYITDDEVDHSMPESDGANPGAGNPSAKSKGKFPSLGKIFKPWKWRKKKTSDKFKETSEGLVLERKMSVRKPREELIERGLLKDIPENESNDVNHKAPPVKNGHTGPVPGDRKSDSGSEIDQDRRMDDTGERKEKRKRIGKRNDGTERMTEMIQSFQKMSLMQRSVGVQFVPEPKPASTSTKESQPPPKQAILPPKRVIAAPSSAEPAPVPPPPIAKPPPRTVSLNVDDSSRTILIPSLIAGDREVPPTVPAHTTPATVSTHKTLPTVPAHMTPPTVPAHVTTPAAPAHSNPPAVLLKQPPMPPPKPVHHSSNTALQGLDLSTVDPSQVPVPVKRSPPIPPKRNTPVTKRNSGDSSANLPEPPPPAPTSVPIPAAAPISAPPSTQSDPPSPTTEPPSQPPPLPLHIRIQRALNSPGPVHPNPEGSQRAHSLLFETPPDLINEALGGGRYSLPVTIEPLRLPEDDDFDMEEELQKLRAGPRPTQKPELEPRSRRGLVEDPQVAVIPEDAGSESSEEEEDESDSDQSIKYRDDNEEDDDEEDVPKSGLASRVKRKDTLALKLERQQEKEKSQEEDSSTWNNKEQWEAVRNKIGTALTRRLSQRPTAQELEQRNILLAKNEEVRRAERSEIKRRLTRKLSQRPTIADLQARKILRFHEYVESTHAQDYDRRADKPWTKLTPADKAAIRKELNEFKSSEMEVHEESRIFTRFHRP.

Over residues 1–12 (MGQGASTQTLNP) the composition is skewed to polar residues. The tract at residues 1-597 (MGQGASTQTL…SSTWNNKEQW (597 aa)) is disordered. The span at 55–64 (KPWKWRKKKT) shows a compositional bias: basic residues. Basic and acidic residues-rich tracts occupy residues 65-100 (SDKFKETSEGLVLERKMSVRKPREELIERGLLKDIP), 124-147 (GDRKSDSGSEIDQDRRMDDTGERK), and 155-164 (KRNDGTERMT). The RPEL 1 repeat unit spans residues 75–100 (LVLERKMSVRKPREELIERGLLKDIP). Residues 166 to 177 (MIQSFQKMSLMQ) are compositionally biased toward polar residues. Over residues 212–221 (VIAAPSSAEP) the composition is skewed to low complexity. The segment covering 222–235 (APVPPPPIAKPPPR) has biased composition (pro residues). Low complexity-rich tracts occupy residues 265 to 276 (PAHTTPATVSTH) and 292 to 313 (PAHVTTPAAPAHSNPPAVLLKQ). Polar residues predominate over residues 359-368 (TPVTKRNSGD). Residues 374-384 (PEPPPPAPTSV) show a composition bias toward pro residues. Over residues 385-401 (PIPAAAPISAPPSTQSD) the composition is skewed to low complexity. The segment covering 402–417 (PPSPTTEPPSQPPPLP) has biased composition (pro residues). Basic and acidic residues predominate over residues 497-510 (QKPELEPRSRRGLV). 2 stretches are compositionally biased toward acidic residues: residues 522–536 (AGSESSEEEEDESDS) and 545–554 (DNEEDDDEED). The span at 567–585 (KDTLALKLERQQEKEKSQE) shows a compositional bias: basic and acidic residues. RPEL repeat units lie at residues 606–631 (TALTRRLSQRPTAQELEQRNILLAKN) and 644–669 (RRLTRKLSQRPTIADLQARKILRFHE).

Belongs to the phosphatase and actin regulator family. In terms of assembly, binds ppp1ca and actin.

The protein resides in the cytoplasm. Its subcellular location is the cell projection. It is found in the lamellipodium. In terms of biological role, regulator of protein phosphatase 1 (PP1) required for neural tube and optic fissure closure, and enteric neural crest cell (ENCCs) migration during development. Acts as an activator of PP1. During neural tube closure, localizes to the ventral neural tube and activates PP1, leading to down-regulate cell proliferation within cranial neural tissue and the neural retina. Also acts as a regulator of migration of enteric neural crest cells (ENCCs) by activating PP1, leading to repression of the integrin signaling through the rho/rock pathway. This is Phosphatase and actin regulator 4A (phactr4a) from Danio rerio (Zebrafish).